Consider the following 891-residue polypeptide: Longitudinals lacking protein, isoform G (891 aa).

The BTB domain maps to 32–97; the sequence is VDCTLAAEGK…MYRGEVNISQ (66 aa). Disordered regions lie at residues 115 to 200 and 228 to 340; these read LSDN…SSVL and SSGP…ASAS. The residue at position 140 (serine 140) is a Phosphoserine. Phosphothreonine is present on threonine 161. Residues serine 162 and serine 168 each carry the phosphoserine modification. Composition is skewed to low complexity over residues 162 to 175, 228 to 251, 263 to 293, and 329 to 340; these read SGDV…SSSP, SSGP…LTST, TSST…QTTS, and NSATGPNPASAS. Phosphoserine is present on residues serine 372, serine 375, and serine 378. A disordered region spans residues 446–467; it reads QDAQQRDPQDLSRKENTAPDVA. The segment covering 449 to 462 has biased composition (basic and acidic residues); sequence QQRDPQDLSRKENT. Residues serine 696 and serine 705 each carry the phosphoserine modification. At threonine 706 the chain carries Phosphothreonine. Residues serine 749 and serine 750 each carry the phosphoserine modification. A C2H2-type 1; degenerate zinc finger spans residues 791–813; that stretch reads YECRHCGKKYRWKSTLRRHENVE. A C2H2-type 2 zinc finger spans residues 821–843; that stretch reads HQCPYCPYKSKQRGNLGVHVRKH. The segment at 840-891 is disordered; sequence VRKHHTDLPQLPSKRRSKYSMNRENGMSGSMSDDSQGKLIIDFNGKGELETK. The residue at position 874 (serine 874) is a Phosphoserine.

As to expression, expressed in both mesoderm and ectoderm with expression highest in the mesectoderm by stage 11. Becomes enriched in a cluster of brain cells, in abdominal histoblasts, and in the embryonic imaginal disks during later stages.

The protein resides in the nucleus. Functionally, putative transcription factor required for axon growth and guidance in the central and peripheral nervous systems. Repels CNS axons away from the midline by promoting the expression of the midline repellent sli and its receptor robo. In Drosophila melanogaster (Fruit fly), this protein is Longitudinals lacking protein, isoform G.